The primary structure comprises 346 residues: MTHTVAVSGASGYAGGEALRLLAGHPFVTVGAITAHSNAGERLGALQPHLHALVDRVLAETTADVLADHDVVILALPHGASGALAAEIAERSPDTLVIDAGADHRLESAADWEAFYGTAHAGTWPYGLPELPGQRERLAGTRRIAVPGCYPTTSILALAPGFAAGLLEPRDVVIVAASGTSGAGKALKPHLLGAEVMGGMSPYGVGGGHRHTPEIEQGLAQAAGEPVRISFTPTLAPMSRGILATATARLRPGVAAADVRAAWASAYGREPFVHLLPEGQWPTTKAVLGSNHVQLQLAVDERAGRVIVCAALDNLTKGTAGGAVQSMNIALGLPEQAGLEQQGVAP.

The active site involves Cys-149.

Belongs to the NAGSA dehydrogenase family. Type 1 subfamily.

The protein localises to the cytoplasm. The enzyme catalyses N-acetyl-L-glutamate 5-semialdehyde + phosphate + NADP(+) = N-acetyl-L-glutamyl 5-phosphate + NADPH + H(+). The protein operates within amino-acid biosynthesis; L-arginine biosynthesis; N(2)-acetyl-L-ornithine from L-glutamate: step 3/4. Its function is as follows. Catalyzes the NADPH-dependent reduction of N-acetyl-5-glutamyl phosphate to yield N-acetyl-L-glutamate 5-semialdehyde. In Micrococcus luteus (strain ATCC 4698 / DSM 20030 / JCM 1464 / CCM 169 / CCUG 5858 / IAM 1056 / NBRC 3333 / NCIMB 9278 / NCTC 2665 / VKM Ac-2230) (Micrococcus lysodeikticus), this protein is N-acetyl-gamma-glutamyl-phosphate reductase.